Here is a 216-residue protein sequence, read N- to C-terminus: Protein fmp32, mitochondrial (216 aa).

Residues 111–133 (RQEMVALHSQVEQLFSDVERLKT) are a coiled coil. A helical transmembrane segment spans residues 193-215 (TLQWVFGIVTGSGALLLAYVRLI).

It belongs to the CCDC90 family.

It is found in the mitochondrion. It localises to the membrane. The sequence is that of Protein fmp32, mitochondrial (fmp32) from Schizosaccharomyces pombe (strain 972 / ATCC 24843) (Fission yeast).